Here is a 428-residue protein sequence, read N- to C-terminus: Putative G-protein coupled receptor F59B2.13 (428 aa).

Over 1–30 (MSNNTTIPSKTATDICLTDRQMSLSVSSTE) the chain is Extracellular. Residues N3 and N4 are each glycosylated (N-linked (GlcNAc...) asparagine). The chain crosses the membrane as a helical span at residues 31 to 51 (GVLIGTIIPILVLFGISGNIL). The Cytoplasmic segment spans residues 52–67 (NLTVLLAPNLRTRSNQ). Residues 68 to 88 (LLACLAVADIVSLVVILPHSM) traverse the membrane as a helical segment. Topologically, residues 89–110 (AHYETFETALWFRKFYGKYKFQ) are extracellular. The chain crosses the membrane as a helical span at residues 111-131 (IIAMTNWSIATATWLVFVICL). Topologically, residues 132 to 154 (ERLIIIKYPLSVRKQAKFFTPRN) are cytoplasmic. A helical membrane pass occupies residues 155–175 (VVTIIVVTTFILTSYNHVSHA). Topologically, residues 176–222 (CAEKLFCNGTQYHVACLGIDSERWFRNEPNPNSEFMKSVVRVAPQVN) are extracellular. A glycan (N-linked (GlcNAc...) asparagine) is linked at N183. Residues 223 to 243 (AIFVVLIPVVLVIIFNVMLIL) traverse the membrane as a helical segment. The Cytoplasmic portion of the chain corresponds to 244–278 (TLRQRTKLFEPSKTIRGDSQFTQLQSKTEHKVTIT). Residues 279-299 (VTAIVTCFTITQSPSAFVTFL) form a helical membrane-spanning segment. At 300-309 (SSYVHRDWVT) the chain is on the extracellular side. A helical transmembrane segment spans residues 310–330 (LSAICTILVVLGKALNFVLFC). Topologically, residues 331-428 (LSSASFRQRL…KEFRRGTSFV (98 aa)) are cytoplasmic.

Belongs to the G-protein coupled receptor 1 family.

It localises to the cell membrane. In Caenorhabditis elegans, this protein is Putative G-protein coupled receptor F59B2.13.